Here is a 506-residue protein sequence, read N- to C-terminus: MEEFQGYLELDRYQQHDFLYPLIFREYIYALAHDHGLNRSILLDNVGYDNKSSLLIIKRLISRMYKQNHFFISANDSNQKKKLGYNKNLYSQKISEGFTVIVEISFSLQLVSSLEATKTVKSYNLRSIHSIFPFLEDKFPHLNYVSDVLIPYPIHLEILVQTLRYWVKDASSLHLLRLFLHEYYNWNSLITSNNFFFSKSNPRLFLLLYNSHVCEYEFILLFLRNQSSHLQLTSSGIFFERIHFYEKIKYPVEEVFANDFPASILWFFKDPFMHYVRYQGKSILASKDTPLLMNKWKYYLVNLWQCHSYVWSQPGRIYINKLSKHSLDFLGYFSSIRPNLSVVRSQMLENSFITDNAMKKLDTLVPIIPLIGSLAKVKFCNALGHPISKSTWADSSDFDIIDRFLRICRNLSHYYSGSSRKKSLYRIKYILRLSCLKTLARKHKSTVRTFLKRLGSKLLEEFFTEEEQILSLVFPRASYTFTFKKFYRGRIWYLDIFCINDLINYE.

Belongs to the intron maturase 2 family. MatK subfamily.

It localises to the plastid. It is found in the chloroplast. Its function is as follows. Usually encoded in the trnK tRNA gene intron. Probably assists in splicing its own and other chloroplast group II introns. The sequence is that of Maturase K from Prunus dulcis (Almond).